Here is a 208-residue protein sequence, read N- to C-terminus: Cytochrome c oxidase assembly protein CtaG (208 aa).

Over 1-19 the chain is Cytoplasmic; it reads MKQRPTGPDTTPRNRRGFG. Residues 20-42 traverse the membrane as a helical; Signal-anchor for type II membrane protein segment; it reads RDTAVASVCGLVVALMVGASYAA. At 43–208 the chain is on the periplasmic side; that stretch reads VPFYNWFCRV…SEAGPRQGAL (166 aa).

The protein belongs to the COX11/CtaG family.

The protein localises to the cell inner membrane. Functionally, exerts its effect at some terminal stage of cytochrome c oxidase synthesis, probably by being involved in the insertion of the copper B into subunit I. The chain is Cytochrome c oxidase assembly protein CtaG from Rhodopseudomonas palustris (strain BisA53).